Here is a 122-residue protein sequence, read N- to C-terminus: Large ribosomal subunit protein bL12 (122 aa).

This sequence belongs to the bacterial ribosomal protein bL12 family. As to quaternary structure, homodimer. Part of the ribosomal stalk of the 50S ribosomal subunit. Forms a multimeric L10(L12)X complex, where L10 forms an elongated spine to which 2 to 4 L12 dimers bind in a sequential fashion. Binds GTP-bound translation factors.

Its function is as follows. Forms part of the ribosomal stalk which helps the ribosome interact with GTP-bound translation factors. Is thus essential for accurate translation. The polypeptide is Large ribosomal subunit protein bL12 (Xylella fastidiosa (strain M12)).